The sequence spans 202 residues: Xanthine phosphoribosyltransferase (202 aa).

Xanthine is bound by residues L20 and N27. Position 128-132 (128-132 (ANGEA)) interacts with 5-phospho-alpha-D-ribose 1-diphosphate. K156 provides a ligand contact to xanthine.

The protein belongs to the purine/pyrimidine phosphoribosyltransferase family. Xpt subfamily. In terms of assembly, homodimer.

It is found in the cytoplasm. It carries out the reaction XMP + diphosphate = xanthine + 5-phospho-alpha-D-ribose 1-diphosphate. It functions in the pathway purine metabolism; XMP biosynthesis via salvage pathway; XMP from xanthine: step 1/1. In terms of biological role, converts the preformed base xanthine, a product of nucleic acid breakdown, to xanthosine 5'-monophosphate (XMP), so it can be reused for RNA or DNA synthesis. The protein is Xanthine phosphoribosyltransferase of Alkaliphilus metalliredigens (strain QYMF).